The chain runs to 200 residues: Dephospho-CoA kinase (200 aa).

A DPCK domain is found at 6-200 (AIALSGGIAT…KIKAKYLEKK (195 aa)). Position 14-19 (14-19 (ATGKST)) interacts with ATP.

Belongs to the CoaE family.

The protein localises to the cytoplasm. The catalysed reaction is 3'-dephospho-CoA + ATP = ADP + CoA + H(+). Its pathway is cofactor biosynthesis; coenzyme A biosynthesis; CoA from (R)-pantothenate: step 5/5. Catalyzes the phosphorylation of the 3'-hydroxyl group of dephosphocoenzyme A to form coenzyme A. The protein is Dephospho-CoA kinase of Sulfurimonas denitrificans (strain ATCC 33889 / DSM 1251) (Thiomicrospira denitrificans (strain ATCC 33889 / DSM 1251)).